A 421-amino-acid polypeptide reads, in one-letter code: MSKTHLTEQKFSDFALHPQVVEALEKKGFYNCTPIQALALPLTLAGRDVAGQAQTGTGKTMAFLTSTFHYLLSHPAIDDRKVNQPRALIMAPTRELAVQIHADAEPLAQATGLKLGLAYGGDGYDKQLKVLESGVDILIGTTGRLIDYAKQNHINLGAIQVVVLDEADRMYDLGFIKDIRWLFRRVPPAAQRLNMLFSATLSYRVRELAFEQMNNAEYVEVEPEQKTGHRIKEELFYPSNEEKMRLLQTLIEEEWPDRAIIFANTKHRCEDIWGHLAADGHRVGLLTGDVAQKKRLRILDEFTRGDLDILVATDVAARGLHIPAVTHVFNYDLPDDCEDYVHRIGRTGRAGASGHSISLACEEYALNLPAIESYIGHSIPVSKYNPEALMNDLPKPLRLTRSRPGNGPRRAGAPRNRRRSG.

The short motif at 9–37 (QKFSDFALHPQVVEALEKKGFYNCTPIQA) is the Q motif element. The 180-residue stretch at 40–219 (LPLTLAGRDV…FEQMNNAEYV (180 aa)) folds into the Helicase ATP-binding domain. Residue 53–60 (AQTGTGKT) participates in ATP binding. Positions 165 to 168 (DEAD) match the DEAD box motif. Residues 245–390 (RLLQTLIEEE…VSKYNPEALM (146 aa)) enclose the Helicase C-terminal domain. The disordered stretch occupies residues 396 to 421 (PLRLTRSRPGNGPRRAGAPRNRRRSG). A compositionally biased stretch (low complexity) spans 402-414 (SRPGNGPRRAGAP).

The protein belongs to the DEAD box helicase family. RhlB subfamily. Component of the RNA degradosome, which is a multiprotein complex involved in RNA processing and mRNA degradation.

Its subcellular location is the cytoplasm. The enzyme catalyses ATP + H2O = ADP + phosphate + H(+). In terms of biological role, DEAD-box RNA helicase involved in RNA degradation. Has RNA-dependent ATPase activity and unwinds double-stranded RNA. The sequence is that of ATP-dependent RNA helicase RhlB from Salmonella paratyphi A (strain AKU_12601).